The following is a 31-amino-acid chain: Sarcolipin (31 aa).

Over 1–7 the chain is Cytoplasmic; it reads MGINTRE. A helical transmembrane segment spans residues 8–26; the sequence is LFLNFTIVLITVILMWLLV. Residues 27 to 31 lie on the Lumenal side of the membrane; the sequence is RSYQY.

The protein belongs to the sarcolipin family. As to quaternary structure, homooligomer. Can also form heterooligomers with other sarcoplasmic/endoplasmic reticulum calcium ATPase (SERCA) regulators ARLN, ERLN, PLN and STRIT1/DWORF. Monomer. Interacts with calcium ATPase ATP2A1/SERCA1. Interacts as a monomer with ATP2A2/SERCA2; the interaction decreases ATP2A2 Ca(2+) affinity. Interacts with VMP1; VMP1 competes with PLN and SLN to prevent them from forming an inhibitory complex with ATP2A2.

The protein localises to the sarcoplasmic reticulum membrane. It localises to the endoplasmic reticulum membrane. Its function is as follows. Reversibly inhibits the activity of ATP2A1/SERCA1 and ATP2A2/SERCA2 in sarcoplasmic reticulum by decreasing the apparent affinity of the ATPase for Ca(2+). Also inhibits the activity of ATP2A3/SERCA3. Modulates calcium re-uptake during muscle relaxation and plays an important role in calcium homeostasis in muscle. Required for muscle-based, non-shivering thermogenesis. The sequence is that of Sarcolipin from Homo sapiens (Human).